A 178-amino-acid polypeptide reads, in one-letter code: ATP synthase subunit delta (178 aa).

This sequence belongs to the ATPase delta chain family. F-type ATPases have 2 components, F(1) - the catalytic core - and F(0) - the membrane proton channel. F(1) has five subunits: alpha(3), beta(3), gamma(1), delta(1), epsilon(1). F(0) has three main subunits: a(1), b(2) and c(10-14). The alpha and beta chains form an alternating ring which encloses part of the gamma chain. F(1) is attached to F(0) by a central stalk formed by the gamma and epsilon chains, while a peripheral stalk is formed by the delta and b chains.

It is found in the cell inner membrane. F(1)F(0) ATP synthase produces ATP from ADP in the presence of a proton or sodium gradient. F-type ATPases consist of two structural domains, F(1) containing the extramembraneous catalytic core and F(0) containing the membrane proton channel, linked together by a central stalk and a peripheral stalk. During catalysis, ATP synthesis in the catalytic domain of F(1) is coupled via a rotary mechanism of the central stalk subunits to proton translocation. Functionally, this protein is part of the stalk that links CF(0) to CF(1). It either transmits conformational changes from CF(0) to CF(1) or is implicated in proton conduction. The chain is ATP synthase subunit delta from Aromatoleum aromaticum (strain DSM 19018 / LMG 30748 / EbN1) (Azoarcus sp. (strain EbN1)).